We begin with the raw amino-acid sequence, 456 residues long: Proline--tRNA ligase (456 aa).

This sequence belongs to the class-II aminoacyl-tRNA synthetase family. ProS type 3 subfamily. Homodimer.

Its subcellular location is the cytoplasm. It catalyses the reaction tRNA(Pro) + L-proline + ATP = L-prolyl-tRNA(Pro) + AMP + diphosphate. Catalyzes the attachment of proline to tRNA(Pro) in a two-step reaction: proline is first activated by ATP to form Pro-AMP and then transferred to the acceptor end of tRNA(Pro). This is Proline--tRNA ligase from Methanococcus aeolicus (strain ATCC BAA-1280 / DSM 17508 / OCM 812 / Nankai-3).